Here is a 359-residue protein sequence, read N- to C-terminus: S-adenosylmethionine:tRNA ribosyltransferase-isomerase (359 aa).

Belongs to the QueA family. In terms of assembly, monomer.

The protein resides in the cytoplasm. It catalyses the reaction 7-aminomethyl-7-carbaguanosine(34) in tRNA + S-adenosyl-L-methionine = epoxyqueuosine(34) in tRNA + adenine + L-methionine + 2 H(+). It functions in the pathway tRNA modification; tRNA-queuosine biosynthesis. Functionally, transfers and isomerizes the ribose moiety from AdoMet to the 7-aminomethyl group of 7-deazaguanine (preQ1-tRNA) to give epoxyqueuosine (oQ-tRNA). This Colwellia psychrerythraea (strain 34H / ATCC BAA-681) (Vibrio psychroerythus) protein is S-adenosylmethionine:tRNA ribosyltransferase-isomerase.